Consider the following 819-residue polypeptide: ATP-dependent DNA helicase PIF4 (819 aa).

The transit peptide at 1–84 (MLLNSTRTLL…RQASSAGHND (84 aa)) directs the protein to the mitochondrion. Residues 76–101 (QASSAGHNDLGLQEKEKSSGDESAFS) form a disordered region. Residue 126–133 (GGAGVGKS) coordinates ATP. The DNA-binding element occupies 734-754 (HIIYVAASRVKKFSQLRMINV).

Belongs to the helicase family. PIF1 subfamily. Monomer. The cofactor is Mg(2+).

It is found in the mitochondrion matrix. Its subcellular location is the kinetoplast. The enzyme catalyses Couples ATP hydrolysis with the unwinding of duplex DNA at the replication fork by translocating in the 5'-3' direction. This creates two antiparallel DNA single strands (ssDNA). The leading ssDNA polymer is the template for DNA polymerase III holoenzyme which synthesizes a continuous strand.. It catalyses the reaction ATP + H2O = ADP + phosphate + H(+). DNA-dependent ATPase and 5'-3' DNA helicase required for the maintenance of mitochondrial (kinetoplast) genome stability. The protein is ATP-dependent DNA helicase PIF4 of Trypanosoma brucei brucei (strain 927/4 GUTat10.1).